We begin with the raw amino-acid sequence, 301 residues long: Oxaloacetate tautomerase YisK (301 aa).

Lys99 serves as a coordination point for oxalate. Mn(2+) contacts are provided by Glu148, Glu150, and Asp179. Positions 196 and 266 each coordinate oxalate.

The protein belongs to the FAH family. In terms of assembly, homodimer. Requires Mg(2+) as cofactor. Mn(2+) is required as a cofactor.

The protein localises to the cytoplasm. It carries out the reaction oxaloacetate = enol-oxaloacetate. The catalysed reaction is oxaloacetate + H(+) = pyruvate + CO2. In terms of biological role, tautomerase that converts enol-oxaloacetate to the keto form of oxaloacetate. Also shows weak oxaloacetate decarboxylase (ODx), catalyzing the decarboxylation of oxaloacetate (OAA) to pyruvate and CO(2). The chain is Oxaloacetate tautomerase YisK from Bacillus subtilis (strain 168).